The chain runs to 821 residues: Calpain-3 (821 aa).

Positions 1–37 are disordered; it reads MPTVISPTVAPRTGAEPRSPGPVPHPAQGKTTEAGGG. Residues 74-417 enclose the Calpain catalytic domain; that stretch reads LYLDPEFPPD…FTKLEICNLT (344 aa). Catalysis depends on residues cysteine 129, histidine 334, and asparagine 358. Residues 418-586 form a domain III region; it reads ADALESDKLQ…KRNLSEEAEN (169 aa). A linker region spans residues 587-649; that stretch reads TISVDRPVKK…RPGHTDQESE (63 aa). A disordered region spans residues 603–651; it reads IFVSDRANSNKELGVDQEAEEGKDKTGPDKQGESPQPRPGHTDQESEEQ. Basic and acidic residues predominate over residues 622 to 634; sequence EEGKDKTGPDKQG. EF-hand domains follow at residues 649-683, 692-725, 722-757, and 787-821; these read EEQQ…VVNK, FTLE…KKIK, KKIK…AGFH, and VRLE…TMYA. Residues 650 to 820 form a domain IV region; it reads EQQQFRNIFR…VLEWLQLTMY (171 aa). Alanine 662, aspartate 665, glutamate 667, glutamate 672, aspartate 705, aspartate 707, serine 709, arginine 711, glutamate 716, aspartate 735, aspartate 737, serine 739, threonine 741, glutamate 746, aspartate 800, aspartate 802, aspartate 804, and isoleucine 806 together coordinate Ca(2+).

It belongs to the peptidase C2 family. Homodimer; via EF-hand domain 4. Interacts with TTN/titin. Interacts with CMYA5; this interaction, which results in CMYA5 proteolysis, may protect CAPN3 from autolysis. Interacts with SIMC1. Interacts with UTP25; the interaction is required for CAPN3 translocation to the nucleolus. Skeletal muscle.

The protein resides in the cytoplasm. The protein localises to the nucleus. It localises to the nucleolus. It catalyses the reaction Broad endopeptidase activity.. Its activity is regulated as follows. Activated by micromolar concentrations of calcium and inhibited by calpastatin. Calcium-regulated non-lysosomal thiol-protease. Proteolytically cleaves CTBP1 at 'His-399'. Mediates, with UTP25, the proteasome-independent degradation of p53/TP53. This chain is Calpain-3 (Capn3), found in Rattus norvegicus (Rat).